A 317-amino-acid polypeptide reads, in one-letter code: Succinate receptor 1 (317 aa).

Residues 1-23 (MAQNLSCENWLATEAILNKYYLS) lie on the Extracellular side of the membrane. The N-linked (GlcNAc...) asparagine glycan is linked to Asn-4. The chain crosses the membrane as a helical span at residues 24–47 (AFYAIEFIFGLLGNVTVVFGYLFC). The Cytoplasmic segment spans residues 48–55 (MKNWNSSN). Residues 56-76 (VYLFNLSISDFAFLCTLPILI) form a helical membrane-spanning segment. Residues 77 to 101 (KSYANDKGTYGDVLCISNRYVLHTN) are Extracellular-facing. Cysteines 91 and 168 form a disulfide. Residues 102 to 119 (LYTSILFLTFISMDRYLL) traverse the membrane as a helical segment. Topologically, residues 120–133 (MKYPFREHFLQKKE) are cytoplasmic. The chain crosses the membrane as a helical span at residues 134-157 (FAILISLAVWALVTLEVLPMLTFI). Over 158–180 (NSVPKEEGSNCIDYASSGNPEHN) the chain is Extracellular. A helical transmembrane segment spans residues 181–204 (LIYSLCLTLLGFLIPLSVMCFFYY). Residues 205-228 (KMVVFLKRRSQQQATALPLDKPQR) are Cytoplasmic-facing. The chain crosses the membrane as a helical span at residues 229–246 (LVVLAVVIFSILFTPYHI). At 247 to 277 (MRNLRIASRLDSWPQGCTQKAIKSIYTLTRP) the chain is on the extracellular side. Residues 278–294 (LAFLNSAINPIFYFLMG) form a helical membrane-spanning segment. Residues 295 to 317 (DHYREMLISKFRQYFKSLTSFRT) lie on the Cytoplasmic side of the membrane.

This sequence belongs to the G-protein coupled receptor 1 family. Predominantly expressed in the kidney (proximal and distal tubules and the juxtaglomerular apparatus). Weakly expressed in liver, spleen and small intestine. Highly expressed in immature dendritic cells, expression rapidly downregulates after maturation. Also expressed in macrophages. Specifically expressed in intestinal tuft cells. Expression in whole muscle is attributable to major non-myofibrillar resident cell types, including stromal, endothelial and satellite cell populations.

Its subcellular location is the cell membrane. Functionally, g protein-coupled receptor for succinate able to mediate signaling through Gq/GNAQ or Gi/GNAI second messengers depending on the cell type and the processes regulated. Succinate-SUCNR1 signaling serves as a link between metabolic stress, inflammation and energy homeostasis. In macrophages, plays a range of immune-regulatory roles. During inflammation, succinate-SUCNR1 signaling may act as an anti-inflammatory mediator or boost inflammation depending on the inflammatory status of cells. Hyperpolarizes M2 macrophages versus M1 phenotype through Gq signaling by regulating the transcription of genes involved in immune function. In activated M1 macrophages, plays a pro-inflammatory role in response to LPS. Expressed in dendritic cells, where it is involved in the sensing of immunological danger and enhances immunity. Mediates succinate triggered intracelleular calcium mobilization, induces migratory responses and acts in synergy with Toll-like receptor ligands for the production of proinflammatory cytokines as well as an enhancement of antigen-specific activation of helper T cells. In the small intestine, mediates the activation of tuft cells by dietary succinate and triggers type 2 immunity. In adipocytes, plays an important role in the control of energy metabolism. In response to succinate, controls leptin expression in an AMPK-JNK-CEBPA-dependent as well as circadian clock-regulated manner. In muscle tissue, is expressed in non-muscle cells and coordinates muscle remodeling in response to the succinate produced during exercise training in a paracrine manner. In retina, acts as a mediator of vessel growth during retinal development. In response to succinate, regulates the production of angiogenic factors, including VEGF, by retinal ganglion neurons. This chain is Succinate receptor 1 (Sucnr1), found in Mus musculus (Mouse).